The primary structure comprises 253 residues: tRNA (guanine-N(1)-)-methyltransferase (253 aa).

S-adenosyl-L-methionine contacts are provided by residues G111 and 131–136 (LGDFVL).

This sequence belongs to the RNA methyltransferase TrmD family. As to quaternary structure, homodimer.

It localises to the cytoplasm. It catalyses the reaction guanosine(37) in tRNA + S-adenosyl-L-methionine = N(1)-methylguanosine(37) in tRNA + S-adenosyl-L-homocysteine + H(+). Its function is as follows. Specifically methylates guanosine-37 in various tRNAs. The polypeptide is tRNA (guanine-N(1)-)-methyltransferase (Synechococcus sp. (strain JA-3-3Ab) (Cyanobacteria bacterium Yellowstone A-Prime)).